The chain runs to 282 residues: Protoheme IX farnesyltransferase (282 aa).

A run of 8 helical transmembrane segments spans residues 40–60 (LVLA…FNMV), 87–107 (AVLA…AVNP), 108–128 (YVFV…TVLL), 135–157 (SVVF…ATGG), 162–184 (GVLL…STYY), 204–224 (AGVV…FLAF), 228–248 (LISA…VAVL), and 261–281 (AYRA…LLVL).

Belongs to the UbiA prenyltransferase family. Protoheme IX farnesyltransferase subfamily.

Its subcellular location is the cell membrane. It catalyses the reaction heme b + (2E,6E)-farnesyl diphosphate + H2O = Fe(II)-heme o + diphosphate. It functions in the pathway porphyrin-containing compound metabolism; heme O biosynthesis; heme O from protoheme: step 1/1. In terms of biological role, converts heme B (protoheme IX) to heme O by substitution of the vinyl group on carbon 2 of heme B porphyrin ring with a hydroxyethyl farnesyl side group. In Thermofilum pendens (strain DSM 2475 / Hrk 5), this protein is Protoheme IX farnesyltransferase.